Reading from the N-terminus, the 170-residue chain is NADH-quinone oxidoreductase subunit B (170 aa).

Positions 46, 47, 111, and 141 each coordinate [4Fe-4S] cluster.

Belongs to the complex I 20 kDa subunit family. As to quaternary structure, NDH-1 is composed of 14 different subunits. Subunits NuoB, C, D, E, F, and G constitute the peripheral sector of the complex. It depends on [4Fe-4S] cluster as a cofactor.

Its subcellular location is the cell membrane. The enzyme catalyses a quinone + NADH + 5 H(+)(in) = a quinol + NAD(+) + 4 H(+)(out). Functionally, NDH-1 shuttles electrons from NADH, via FMN and iron-sulfur (Fe-S) centers, to quinones in the respiratory chain. The immediate electron acceptor for the enzyme in this species is believed to be a menaquinone. Couples the redox reaction to proton translocation (for every two electrons transferred, four hydrogen ions are translocated across the cytoplasmic membrane), and thus conserves the redox energy in a proton gradient. In Geobacillus sp. (strain WCH70), this protein is NADH-quinone oxidoreductase subunit B.